Consider the following 705-residue polypeptide: Translation initiation factor IF-2 (705 aa).

Residues 40-124 form a disordered region; it reads DDQIKALDKK…QPAAPKEIPS (85 aa). The span at 41-58 shows a compositional bias: basic and acidic residues; that stretch reads DQIKALDKKFKKEQKNDN. A compositionally biased stretch (low complexity) spans 59–77; that stretch reads KQSTQNNHQKSNNQNQNKG. The span at 94 to 108 shows a compositional bias: basic residues; that stretch reads KGNKKNNRNNKKNNK. The region spanning 207–376 is the tr-type G domain; sequence ERPAVVTIMG…GLVAEVQELK (170 aa). Positions 216–223 are G1; it reads GHVDHGKT. 216 to 223 provides a ligand contact to GTP; the sequence is GHVDHGKT. Residues 241 to 245 are G2; it reads GITQH. The G3 stretch occupies residues 262–265; the sequence is DTPG. GTP-binding positions include 262-266 and 316-319; these read DTPGH and NKID. Residues 316–319 are G4; that stretch reads NKID. The interval 352–354 is G5; that stretch reads SAL.

This sequence belongs to the TRAFAC class translation factor GTPase superfamily. Classic translation factor GTPase family. IF-2 subfamily.

It is found in the cytoplasm. One of the essential components for the initiation of protein synthesis. Protects formylmethionyl-tRNA from spontaneous hydrolysis and promotes its binding to the 30S ribosomal subunits. Also involved in the hydrolysis of GTP during the formation of the 70S ribosomal complex. This chain is Translation initiation factor IF-2, found in Staphylococcus aureus (strain USA300).